The primary structure comprises 245 residues: tRNA pseudouridine synthase A (245 aa).

Asp-52 (nucleophile) is an active-site residue. Position 111 (Tyr-111) interacts with substrate.

This sequence belongs to the tRNA pseudouridine synthase TruA family. In terms of assembly, homodimer.

The enzyme catalyses uridine(38/39/40) in tRNA = pseudouridine(38/39/40) in tRNA. Formation of pseudouridine at positions 38, 39 and 40 in the anticodon stem and loop of transfer RNAs. The protein is tRNA pseudouridine synthase A of Wolbachia sp. subsp. Drosophila simulans (strain wRi).